The primary structure comprises 380 residues: MQFLSDTQRMVLSRAVCASFFFFHVAVAAYTARVQEMAMRGFALRNFQQVHAYFEQHIPLLSSFTEKKEALSLFAQYLELHDAHERAAHRYRDAALYALGTERVQFLLEATRNAMAADAREYARETLAEVEHIGVQVLNKKQHATFLVYHVWLALHAASTAAHLHEQLERLEEYGTQGVFNVFETVLLFTRWWITQDEKVAQRLTERYPQSFEALSVIGAVEIAPSVFWHLMPRAYGEAVESMGKSETVVLQDAKLRPVPEVVAAHRTRRAHVAADGTAARSAMSSSHNLGVSILEGGVSVPDEVGAGDEKPRGYQLGFFRAKENAQRLMDDLERRGFGFQLHTVRRADAVYYQVFVPEDDSGFVGHRLKDAGYETFPLF.

The first 28 residues, 1–28 (MQFLSDTQRMVLSRAVCASFFFFHVAVA), serve as a signal peptide directing secretion. Residues 307-380 (AGDEKPRGYQ…DAGYETFPLF (74 aa)) form the SPOR domain.

This is an uncharacterized protein from Treponema pallidum (strain Nichols).